Here is a 244-residue protein sequence, read N- to C-terminus: NAD(P)H-quinone oxidoreductase subunit K (244 aa).

[4Fe-4S] cluster is bound by residues cysteine 60, cysteine 61, cysteine 125, and cysteine 156. Residues 221 to 236 (SKKEKITELPENREQT) are compositionally biased toward basic and acidic residues. Residues 221-244 (SKKEKITELPENREQTEIINSEEE) are disordered.

The protein belongs to the complex I 20 kDa subunit family. As to quaternary structure, NDH-1 can be composed of about 15 different subunits; different subcomplexes with different compositions have been identified which probably have different functions. It depends on [4Fe-4S] cluster as a cofactor.

It is found in the cellular thylakoid membrane. The catalysed reaction is a plastoquinone + NADH + (n+1) H(+)(in) = a plastoquinol + NAD(+) + n H(+)(out). The enzyme catalyses a plastoquinone + NADPH + (n+1) H(+)(in) = a plastoquinol + NADP(+) + n H(+)(out). NDH-1 shuttles electrons from an unknown electron donor, via FMN and iron-sulfur (Fe-S) centers, to quinones in the respiratory and/or the photosynthetic chain. The immediate electron acceptor for the enzyme in this species is believed to be plastoquinone. Couples the redox reaction to proton translocation, and thus conserves the redox energy in a proton gradient. Cyanobacterial NDH-1 also plays a role in inorganic carbon-concentration. This chain is NAD(P)H-quinone oxidoreductase subunit K, found in Prochlorococcus marinus (strain MIT 9312).